The sequence spans 352 residues: RAD51-associated protein 1 (352 aa).

Over residues 1–10 (MVRPVRHKKP) the composition is skewed to basic residues. 2 disordered regions span residues 1 to 78 (MVRP…TFSI) and 115 to 144 (TNVQ…HISN). Residues Ser19 and Ser21 each carry the phosphoserine modification. The interaction with DNA stretch occupies residues 30–49 (VPLNKKSRTAPKELKQDKPK). The segment covering 39–72 (APKELKQDKPKPNLNNLRKEEIPVQEKTPKKRLP) has biased composition (basic and acidic residues). Thr66 bears the Phosphothreonine mark. Residues Ser120 and Ser124 each carry the phosphoserine modification. The span at 132 to 144 (KIETMNKSPHISN) shows a compositional bias: polar residues. An SIM motif motif is present at residues 154-159 (LDKITV). Residues 162–323 (DVGGVQGKRK…RSSSSPLVVV (162 aa)) are disordered. Residues 188–221 (SDGDSANDTEPDFAPGEDSEDDSDFCESEDNDED) show a composition bias toward acidic residues. Residues 229–247 (VKEIKKKEVKVKSPVEKKE) are compositionally biased toward basic and acidic residues. The tract at residues 243-304 (VEKKEKKSKS…PSAESKKPKW (62 aa)) is interaction with DNA. Residue Lys251 forms a Glycyl lysine isopeptide (Lys-Gly) (interchain with G-Cter in ubiquitin; alternate) linkage. Residue Lys269 forms a Glycyl lysine isopeptide (Lys-Gly) (interchain with G-Cter in SUMO) linkage. The segment covering 270 to 284 (SESQSLPKKVSLSSD) has biased composition (polar residues). The residue at position 280 (Ser280) is a Phosphoserine. A WVPP motif motif is present at residues 304–307 (WVPP). Residues 306-323 (PPAASGGSRSSSSPLVVV) show a composition bias toward low complexity. The interval 313 to 352 (SRSSSSPLVVVSVKSPNQSLRLGLSRLARVKPLHPNATST) is interaction with RAD51. Ser327 is subject to Phosphoserine.

Monomer; elongated monodisperse monomer. Interacts (via C-terminal region) with RAD51; the interaction is direct. Interacts (via SIM motif) with WDR48/UAF1; WDR48/UAF1 and RAD51AP1 cooperate together to stimulate RAD51-mediated homologous recombination (HR). Interacts (via WVPP motif) with DMC1; the interaction is direct. Interacts with PALB2. Interacts with RAD52. As to quaternary structure, does not interact with DMC1; lack of interaction is caused by the absence of the WVPP motif in this isoform. Sumoylation with SUMO2/3 by NSMCE2/MMS21 promotes stabilization, possibly by preventing ubiquitination. Sumoylation is required for alternative lengthening of telomeres (ALT) pathway. Highly expressed in testis and thymus. Lower levels in colon and small intestine. Little or no expression in spleen, prostate, ovary and peripheral blood leukocytes.

Its subcellular location is the chromosome. The protein resides in the nucleus. The protein localises to the telomere. Structure-specific DNA-binding protein involved in DNA repair by promoting RAD51-mediated homologous recombination. Acts by stimulating D-Loop formation by RAD51: specifically enhances joint molecule formation through its structure-specific DNA interaction and its interaction with RAD51. Binds single-stranded DNA (ssDNA), double-stranded DNA (dsDNA) and secondary DNA structures, such as D-loop structures: has a strong preference for branched-DNA structures that are obligatory intermediates during joint molecule formation. Cooperates with WDR48/UAF1 to stimulate RAD51-mediated homologous recombination: both WDR48/UAF1 and RAD51AP1 have coordinated role in DNA-binding during homologous recombination and DNA repair. WDR48/UAF1 and RAD51AP1 also have a coordinated role in DNA-binding to promote USP1-mediated deubiquitination of FANCD2. Also involved in meiosis by promoting DMC1-mediated homologous meiotic recombination. Key mediator of alternative lengthening of telomeres (ALT) pathway, a homology-directed repair mechanism of telomere elongation that controls proliferation in aggressive cancers, by stimulating homologous recombination. May also bind RNA; additional evidences are however required to confirm RNA-binding in vivo. This Homo sapiens (Human) protein is RAD51-associated protein 1.